Here is a 285-residue protein sequence, read N- to C-terminus: NADH-dependent oxidoreductase ucdB (285 aa).

Position 87 (T87) interacts with NAD(+). K156 is a catalytic residue.

It belongs to the HIBADH-related family. NP60 subfamily.

Its pathway is secondary metabolite biosynthesis. In terms of biological role, nonribosomal peptide synthetase that mediates the biosynthesis of usterphenyllins and uscandidusins, p-terphenyl derivatives. Within the pathway, ucdB alone catalyzes both reduction and dehydration of atromentin to form a terphenyl triol intermediate. The pathway begin with the biosynthesis of 4-hydroxyphenylpyruvate (HPPA) from L-tyrosine, possibly by the aminotransferase ucdG. The nonribosomal peptide synthetase ucdA then condenses two HPPA units to produce atromentin. The key step in this pathway is the reduction and dehydration of atromentin to form a terphenyl triol intermediate, performed by the NAD-dependent dehydrogenase ucdB. Further O-methylation by the methyltransferase ucdC forms terphenyllin carrying two methoxy moieties at C-9 and C-12, and subsequent dihydroxylation at C-3 of ring A and C-15 of ring C by the flavin-dependent oxygenase ucdD leads to 3,15-dihydroxyterphenyllin. Prenylation by ucdE at position C-5 of ring A forms usterphenyllin B, and is followed by a second prenylation at position C-14 of ring C to form usterphenyllin A. The following furan ring formation that leads to uscandidusins A and B was proven to be an unexpected spontaneous non-enzymatic reaction. The chain is NADH-dependent oxidoreductase ucdB from Aspergillus ustus.